The following is a 296-amino-acid chain: 4-hydroxy-tetrahydrodipicolinate synthase (296 aa).

Thr49 is a binding site for pyruvate. The active-site Proton donor/acceptor is Tyr137. The active-site Schiff-base intermediate with substrate is the Lys166. Ile208 serves as a coordination point for pyruvate.

Belongs to the DapA family. Homotetramer; dimer of dimers.

It localises to the cytoplasm. It carries out the reaction L-aspartate 4-semialdehyde + pyruvate = (2S,4S)-4-hydroxy-2,3,4,5-tetrahydrodipicolinate + H2O + H(+). Its pathway is amino-acid biosynthesis; L-lysine biosynthesis via DAP pathway; (S)-tetrahydrodipicolinate from L-aspartate: step 3/4. Its function is as follows. Catalyzes the condensation of (S)-aspartate-beta-semialdehyde [(S)-ASA] and pyruvate to 4-hydroxy-tetrahydrodipicolinate (HTPA). The chain is 4-hydroxy-tetrahydrodipicolinate synthase from Chlorobium luteolum (strain DSM 273 / BCRC 81028 / 2530) (Pelodictyon luteolum).